The following is a 782-amino-acid chain: Semaphorin-3G (782 aa).

Positions 1–22 (MAPSAWAICWLLGGLLLHGGSS) are cleaved as a signal peptide. A Sema domain is found at 32–519 (RLRLSYRDLL…SRLGVAQLRL (488 aa)). Residue Asn44 is glycosylated (N-linked (GlcNAc...) asparagine). Cys105 and Cys116 are oxidised to a cystine. Asn127 carries N-linked (GlcNAc...) asparagine glycosylation. Disulfide bonds link Cys134–Cys143, Cys270–Cys382, Cys294–Cys342, Cys522–Cys540, and Cys603–Cys655. In terms of domain architecture, Ig-like C2-type spans 569 to 671 (PALQCLGQSQ…FSQTVVRLAL (103 aa)).

The protein belongs to the semaphorin family.

The protein resides in the secreted. In terms of biological role, has chemorepulsive activities for sympathetic axons. Ligand of NRP2. This is Semaphorin-3G (SEMA3G) from Homo sapiens (Human).